Reading from the N-terminus, the 198-residue chain is V-type ATP synthase subunit E (198 aa).

Belongs to the V-ATPase E subunit family.

Functionally, produces ATP from ADP in the presence of a proton gradient across the membrane. This chain is V-type ATP synthase subunit E, found in Clostridium perfringens (strain ATCC 13124 / DSM 756 / JCM 1290 / NCIMB 6125 / NCTC 8237 / Type A).